We begin with the raw amino-acid sequence, 1012 residues long: Translation initiation factor IF-2, chloroplastic (1012 aa).

A compositionally biased stretch (low complexity) spans 75–102; the sequence is GNSVSLDSNSNSSSSSKSGGDDGTGFVL. Disordered stretches follow at residues 75–132, 147–294, and 319–340; these read GNSV…VEER, EKLG…KEKK, and APPK…RKKG. The span at 152 to 175 shows a compositional bias: polar residues; it reads SKVNGDKNNGSVNKPVRNNANASP. Low complexity predominate over residues 183-194; that stretch reads SAASLKSKTLKS. A compositionally biased stretch (basic and acidic residues) spans 208-231; it reads VVKEVPKPSYNKNEEEKSQTRGGE. Positions 240-257 are enriched in pro residues; the sequence is PQPPSKPQPLKPQQPSKP. Basic and acidic residues predominate over residues 277-294; sequence VLRDKGAAETSVKSKEKK. In terms of domain architecture, tr-type G spans 488–661; the sequence is DRPPVITIMG…MLVAELQELK (174 aa). Residues 497 to 504 are G1; that stretch reads GHVDHGKT. 497-504 is a binding site for GTP; it reads GHVDHGKT. The interval 522–526 is G2; it reads GITQG. The tract at residues 547–550 is G3; that stretch reads DTPG. Residues 547-551 and 601-604 contribute to the GTP site; these read DTPGH and NKID. Residues 601–604 form a G4 region; that stretch reads NKID. Residues 637-639 form a G5 region; that stretch reads SAL.

The protein belongs to the TRAFAC class translation factor GTPase superfamily. Classic translation factor GTPase family. IF-2 subfamily.

It localises to the plastid. The protein localises to the chloroplast. Functionally, one of the essential components for the initiation of protein synthesis. Protects formylmethionyl-tRNA from spontaneous hydrolysis and promotes its binding to the 30S ribosomal subunits. Also involved in the hydrolysis of GTP during the formation of the 70S ribosomal complex. The protein is Translation initiation factor IF-2, chloroplastic (IF2CP) of Phaseolus vulgaris (Kidney bean).